The chain runs to 412 residues: Tyrosine--tRNA ligase (412 aa).

The 'HIGH' region motif lies at 48 to 57 (PSRPDLHLGH). The short motif at 232–236 (KMSKS) is the 'KMSKS' region element. Lysine 235 contributes to the ATP binding site. Residues 342-405 (VGLLNLMRHA…GKRRFARIRP (64 aa)) enclose the S4 RNA-binding domain.

Belongs to the class-I aminoacyl-tRNA synthetase family. TyrS type 2 subfamily. As to quaternary structure, homodimer.

Its subcellular location is the cytoplasm. It carries out the reaction tRNA(Tyr) + L-tyrosine + ATP = L-tyrosyl-tRNA(Tyr) + AMP + diphosphate + H(+). Catalyzes the attachment of tyrosine to tRNA(Tyr) in a two-step reaction: tyrosine is first activated by ATP to form Tyr-AMP and then transferred to the acceptor end of tRNA(Tyr). The sequence is that of Tyrosine--tRNA ligase from Salinibacter ruber (strain DSM 13855 / M31).